The primary structure comprises 143 residues: Sirohydrochlorin cobaltochelatase (143 aa).

His-9 (proton acceptor) is an active-site residue. His-9 contributes to the Co(2+) binding site. His-9 contributes to the Ni(2+) binding site. Substrate contacts are provided by residues Glu-45 and 70–75 (LAHGVH). His-75 contributes to the Co(2+) binding site. His-75 lines the Ni(2+) pocket.

The protein belongs to the CbiX family. CbiXS subfamily. As to quaternary structure, homotetramer; dimer of dimers.

It carries out the reaction Co-sirohydrochlorin + 2 H(+) = sirohydrochlorin + Co(2+). It catalyses the reaction Ni-sirohydrochlorin + 2 H(+) = sirohydrochlorin + Ni(2+). Its pathway is cofactor biosynthesis; adenosylcobalamin biosynthesis; cob(II)yrinate a,c-diamide from sirohydrochlorin (anaerobic route): step 1/10. Its function is as follows. Catalyzes the insertion of Co(2+) into sirohydrochlorin as part of the anaerobic pathway to cobalamin biosynthesis. Involved in the biosynthesis of the unique nickel-containing tetrapyrrole coenzyme F430, the prosthetic group of methyl-coenzyme M reductase (MCR), which plays a key role in methanogenesis and anaerobic methane oxidation. Catalyzes the insertion of Ni(2+) into sirohydrochlorin to yield Ni-sirohydrochlorin. In Methanopyrus kandleri (strain AV19 / DSM 6324 / JCM 9639 / NBRC 100938), this protein is Sirohydrochlorin cobaltochelatase.